A 128-amino-acid chain; its full sequence is Large ribosomal subunit protein bL20c (128 aa).

Belongs to the bacterial ribosomal protein bL20 family. Component of the chloroplast large ribosomal subunit (LSU). Mature 70S chloroplast ribosomes of higher plants consist of a small (30S) and a large (50S) subunit. The 30S small subunit contains 1 molecule of ribosomal RNA (16S rRNA) and 24 different proteins. The 50S large subunit contains 3 rRNA molecules (23S, 5S and 4.5S rRNA) and 33 different proteins.

The protein localises to the plastid. Its subcellular location is the chloroplast. Component of the chloroplast ribosome (chloro-ribosome), a dedicated translation machinery responsible for the synthesis of chloroplast genome-encoded proteins, including proteins of the transcription and translation machinery and components of the photosynthetic apparatus. In Spinacia oleracea (Spinach), this protein is Large ribosomal subunit protein bL20c (rpl20).